The primary structure comprises 276 residues: NH(3)-dependent NAD(+) synthetase (276 aa).

46–53 (GISGGQDS) contributes to the ATP binding site. D52 contributes to the Mg(2+) binding site. R141 provides a ligand contact to deamido-NAD(+). T161 is a binding site for ATP. Residue E166 participates in Mg(2+) binding. 2 residues coordinate deamido-NAD(+): K174 and D181. ATP is bound by residues K190 and T212. A deamido-NAD(+)-binding site is contributed by 261–262 (HK).

Belongs to the NAD synthetase family. Homodimer.

It catalyses the reaction deamido-NAD(+) + NH4(+) + ATP = AMP + diphosphate + NAD(+) + H(+). The protein operates within cofactor biosynthesis; NAD(+) biosynthesis; NAD(+) from deamido-NAD(+) (ammonia route): step 1/1. Catalyzes the ATP-dependent amidation of deamido-NAD to form NAD. Uses ammonia as a nitrogen source. This Limosilactobacillus fermentum (strain NBRC 3956 / LMG 18251) (Lactobacillus fermentum) protein is NH(3)-dependent NAD(+) synthetase.